The following is a 410-amino-acid chain: Aspartic proteinase Asp1 (410 aa).

Residues Met-1–Ala-23 form the signal peptide. Residues Val-24–Asp-46 constitute a propeptide, removed in mature form. The region spanning Phe-38–Val-392 is the Peptidase A1 domain. Catalysis depends on residues Asp-56 and Asp-257.

It belongs to the peptidase A1 family. Expressed in pollen, nucellus, ovary wall, shoot and root meristem, coleoptiles of immature seeds, and somatic embryos.

Its function is as follows. Possesses protease activity in vitro. The sequence is that of Aspartic proteinase Asp1 (ASP1) from Oryza sativa subsp. indica (Rice).